A 334-amino-acid polypeptide reads, in one-letter code: Transcription factor MYB92 (334 aa).

HTH myb-type domains lie at 9 to 61 (DSGL…TNYL) and 62 to 116 (RPDI…KKKL). 2 DNA-binding regions (H-T-H motif) span residues 37–61 (WRAL…TNYL) and 89–112 (WSTI…NTHL).

As to quaternary structure, interacts with FBX5. Highly expressed in roots and at lower levels in stems, flowers and siliques.

It localises to the nucleus. In terms of biological role, probable transcription factor. The sequence is that of Transcription factor MYB92 from Arabidopsis thaliana (Mouse-ear cress).